We begin with the raw amino-acid sequence, 275 residues long: Diaminopimelate epimerase (275 aa).

Positions 20 and 63 each coordinate substrate. The Proton donor role is filled by Cys72. Residues 73 to 74 (GN), Asn179, and 197 to 198 (ER) each bind substrate. Cys207 (proton acceptor) is an active-site residue. 208 to 209 (GT) provides a ligand contact to substrate.

This sequence belongs to the diaminopimelate epimerase family. Homodimer.

The protein resides in the cytoplasm. It catalyses the reaction (2S,6S)-2,6-diaminopimelate = meso-2,6-diaminopimelate. The protein operates within amino-acid biosynthesis; L-lysine biosynthesis via DAP pathway; DL-2,6-diaminopimelate from LL-2,6-diaminopimelate: step 1/1. Its function is as follows. Catalyzes the stereoinversion of LL-2,6-diaminopimelate (L,L-DAP) to meso-diaminopimelate (meso-DAP), a precursor of L-lysine and an essential component of the bacterial peptidoglycan. The chain is Diaminopimelate epimerase from Chlamydia trachomatis serovar A (strain ATCC VR-571B / DSM 19440 / HAR-13).